Here is a 76-residue protein sequence, read N- to C-terminus: ATP synthase peripheral stalk subunit F6, mitochondrial (76 aa).

N6-acetyllysine occurs at positions 9, 14, and 47. N6-acetyllysine; alternate is present on residues K52 and K67. N6-succinyllysine; alternate is present on residues K52 and K67. Position 73 is an N6-acetyllysine (K73). The residue at position 76 (S76) is a Phosphoserine.

This sequence belongs to the eukaryotic ATPase subunit F6 family. As to quaternary structure, component of the ATP synthase complex composed at least of ATP5F1A/subunit alpha, ATP5F1B/subunit beta, ATP5MC1/subunit c (homooctomer), MT-ATP6/subunit a, MT-ATP8/subunit 8, ATP5ME/subunit e, ATP5MF/subunit f, ATP5MG/subunit g, ATP5MK/subunit k, ATP5MJ/subunit j, ATP5F1C/subunit gamma, ATP5F1D/subunit delta, ATP5F1E/subunit epsilon, ATP5PF/subunit F6, ATP5PB/subunit b, ATP5PD/subunit d, ATP5PO/subunit OSCP. ATP synthase complex consists of a soluble F(1) head domain (subunits alpha(3) and beta(3)) - the catalytic core - and a membrane F(0) domain - the membrane proton channel (subunits c, a, 8, e, f, g, k and j). These two domains are linked by a central stalk (subunits gamma, delta, and epsilon) rotating inside the F1 region and a stationary peripheral stalk (subunits F6, b, d, and OSCP).

The protein resides in the mitochondrion. Its subcellular location is the mitochondrion inner membrane. Its function is as follows. Subunit F6, of the mitochondrial membrane ATP synthase complex (F(1)F(0) ATP synthase or Complex V) that produces ATP from ADP in the presence of a proton gradient across the membrane which is generated by electron transport complexes of the respiratory chain. ATP synthase complex consist of a soluble F(1) head domain - the catalytic core - and a membrane F(1) domain - the membrane proton channel. These two domains are linked by a central stalk rotating inside the F(1) region and a stationary peripheral stalk. During catalysis, ATP synthesis in the catalytic domain of F(1) is coupled via a rotary mechanism of the central stalk subunits to proton translocation. In vivo, can only synthesize ATP although its ATP hydrolase activity can be activated artificially in vitro. Part of the complex F(0) domain. Part of the complex F(0) domain and the peripheric stalk, which acts as a stator to hold the catalytic alpha(3)beta(3) subcomplex and subunit a/ATP6 static relative to the rotary elements. The protein is ATP synthase peripheral stalk subunit F6, mitochondrial of Sus scrofa (Pig).